The following is a 667-amino-acid chain: Probable export ATP-binding/permease protein MacB (667 aa).

The 239-residue stretch at 22-260 folds into the ABC transporter domain; that stretch reads LRLAGVSRRF…PVEEVQPAAE (239 aa). ATP is bound at residue 58–65; the sequence is GASGSGKS. Transmembrane regions (helical) follow at residues 292-312, 540-560, 601-621, and 630-650; these read LLTM…SAIG, LTLL…IGVM, IGGV…ALFV, and LGSI…FGFV.

Belongs to the ABC transporter superfamily. Macrolide exporter (TC 3.A.1.122) family. In terms of assembly, probably part of a tripartite efflux system, which is composed of an inner membrane transporter, a periplasmic membrane fusion protein, and an outer membrane component.

The protein resides in the cell inner membrane. In terms of biological role, probably part of a tripartite efflux system. In Pseudomonas entomophila (strain L48), this protein is Probable export ATP-binding/permease protein MacB.